The primary structure comprises 230 residues: UPF0502 protein Oter_3715 (230 aa).

Belongs to the UPF0502 family.

This is UPF0502 protein Oter_3715 from Opitutus terrae (strain DSM 11246 / JCM 15787 / PB90-1).